We begin with the raw amino-acid sequence, 133 residues long: Large ribosomal subunit protein bL17 (133 aa).

The protein belongs to the bacterial ribosomal protein bL17 family. In terms of assembly, part of the 50S ribosomal subunit. Contacts protein L32.

In Thermodesulfovibrio yellowstonii (strain ATCC 51303 / DSM 11347 / YP87), this protein is Large ribosomal subunit protein bL17.